The primary structure comprises 242 residues: Protein HTATIP2 (242 aa).

Position 2 is an N-acetylalanine (alanine 2). Positions 2–25 are required for interaction with elongation factor EEF1A1; it reads AETEALSKLREDFRMQNKSVFILG. NADPH-binding residues include serine 27, glycine 28, glutamate 29, threonine 30, arginine 52, arginine 53, leucine 92, glycine 93, tyrosine 143, lysine 147, leucine 170, and arginine 178. Tyrosine 143 (proton acceptor) is an active-site residue. Residue lysine 147 is part of the active site.

Monomer. Forms homodimers during oxidative stress. Interacts (via N-terminus) with elongation factor EEF1A1 (via middle-region); the interaction is direct and competes with EEF1A1 binding to guanyl-nucleotide exchange factor EEF1B2, thereby inhibiting GDP for GTP exchange and reactivation of EEF1A1. Interacts with nuclear transport receptors XPO4, IPO5/RANBP5, IPO7, IPO9 and KPNB1 as well as GCN1L1/GCN1 and LRPPRC probably through their HEAT repeats. Binds NCOA5/CIA. In terms of assembly, interacts (via N-terminus) with proteasome subunit PSMD4/s5a. As to quaternary structure, (Microbial infection) Interacts with HIV-1 Tat (via activation domain). High levels in liver, lung, skeletal muscle, pancreas and placenta. Moderate levels in heart and kidney. Low levels in brain. Not expressed or low levels in variant small cell lung carcinomas, 33% of hepatocellular carcinomas and neuroblastomas. Levels are reduced in the heart of patients with hypertrophic cardiomyopathy and failing hearts.

The protein resides in the cytoplasm. Its function is as follows. Represses translation by preventing reactivation of elongation factor eEF1A. May also inhibit nuclear import by competing with nuclear import substrates for binding to a subset of nuclear transport receptors. Has additionally been proposed to act as a redox sensor involved in cellular oxidative stress surveillance. The polypeptide is Protein HTATIP2 (Homo sapiens (Human)).